The sequence spans 85 residues: MSKNHLLQDPFLNELRKEKVPVSVFLVNGIKLHGIIDSFDQYVVMLKNSITQMVYKHAISTVVPSRMVKIPAEESSGEEEGTVAD.

Residues 9-68 form the Sm domain; the sequence is DPFLNELRKEKVPVSVFLVNGIKLHGIIDSFDQYVVMLKNSITQMVYKHAISTVVPSRMV.

The protein belongs to the Hfq family. As to quaternary structure, homohexamer.

Functionally, RNA chaperone that binds small regulatory RNA (sRNAs) and mRNAs to facilitate mRNA translational regulation in response to envelope stress, environmental stress and changes in metabolite concentrations. Also binds with high specificity to tRNAs. The polypeptide is RNA-binding protein Hfq (Legionella pneumophila (strain Paris)).